Reading from the N-terminus, the 180-residue chain is Ribosome maturation factor RimM (180 aa).

Positions 97–176 constitute a PRC barrel domain; the sequence is EGEFFYCDLI…KITTNNAKTL (80 aa).

The protein belongs to the RimM family. Binds ribosomal protein uS19.

It is found in the cytoplasm. Its function is as follows. An accessory protein needed during the final step in the assembly of 30S ribosomal subunit, possibly for assembly of the head region. Essential for efficient processing of 16S rRNA. May be needed both before and after RbfA during the maturation of 16S rRNA. It has affinity for free ribosomal 30S subunits but not for 70S ribosomes. The sequence is that of Ribosome maturation factor RimM from Helicobacter acinonychis (strain Sheeba).